A 456-amino-acid chain; its full sequence is 3-isopropylmalate dehydratase large subunit (456 aa).

Positions 336, 396, and 399 each coordinate [4Fe-4S] cluster.

It belongs to the aconitase/IPM isomerase family. LeuC type 1 subfamily. As to quaternary structure, heterodimer of LeuC and LeuD. Requires [4Fe-4S] cluster as cofactor.

The enzyme catalyses (2R,3S)-3-isopropylmalate = (2S)-2-isopropylmalate. Its pathway is amino-acid biosynthesis; L-leucine biosynthesis; L-leucine from 3-methyl-2-oxobutanoate: step 2/4. In terms of biological role, catalyzes the isomerization between 2-isopropylmalate and 3-isopropylmalate, via the formation of 2-isopropylmaleate. In Staphylococcus aureus (strain MW2), this protein is 3-isopropylmalate dehydratase large subunit.